A 446-amino-acid chain; its full sequence is Keratin, type I cytoskeletal 25 (446 aa).

The disordered stretch occupies residues 1–20; the sequence is MSLRLSSGSKRSYARPSTGS. A head region spans residues 1–74; it reads MSLRLSSGSK…VNEGGLLSGN (74 aa). The coil 1A stretch occupies residues 75 to 110; that stretch reads EKVTMQNLNDRLASYLDNVQALQEANADLEQKIKGW. The 316-residue stretch at 75-390 folds into the IF rod domain; the sequence is EKVTMQNLND…LLIGGDEGAC (316 aa). A linker 1 region spans residues 111 to 132; it reads YEKFGPGSCRGLDHDYSRYFPI. The tract at residues 133–224 is coil 1B; sequence IDDLKNQIIT…KNHKEEMQAL (92 aa). A linker 12 region spans residues 225 to 247; the sequence is QCAAGGNVNVEMNAAPGVDLTVL. The segment at 248–386 is coil 2; the sequence is LNNMRAEYEA…ETYCLLIGGD (139 aa). Positions 387–446 are tail; sequence EGACKSSSYKSKDYTSGNAGNQSKDSPKAIVVKKVLEEVDQRSKILTTRLHSLEEKSQSN. The interval 394–413 is disordered; sequence SYKSKDYTSGNAGNQSKDSP. Residues 400–410 show a composition bias toward polar residues; sequence YTSGNAGNQSK. Position 438 is a phosphoserine (S438).

Belongs to the intermediate filament family. As to quaternary structure, heterodimer of a type I and a type II keratin. Heterodimer with type II keratin KRT5 leading to the formation of keratin intermediate filament (KIF) network. Interacts with KRT6A to form filaments.

The protein localises to the cytoplasm. In terms of biological role, essential for the proper assembly of type I and type II keratin protein complexes and formation of keratin intermediate filaments in the inner root sheath (irs). Plays a role in the cytoskeleton organization. The protein is Keratin, type I cytoskeletal 25 of Rattus norvegicus (Rat).